The primary structure comprises 291 residues: 4-diphosphocytidyl-2-C-methyl-D-erythritol kinase (291 aa).

Residue lysine 8 is part of the active site. An ATP-binding site is contributed by 89-99 (PIGSGIGGGSS). The active site involves aspartate 131.

Belongs to the GHMP kinase family. IspE subfamily.

The enzyme catalyses 4-CDP-2-C-methyl-D-erythritol + ATP = 4-CDP-2-C-methyl-D-erythritol 2-phosphate + ADP + H(+). It functions in the pathway isoprenoid biosynthesis; isopentenyl diphosphate biosynthesis via DXP pathway; isopentenyl diphosphate from 1-deoxy-D-xylulose 5-phosphate: step 3/6. Functionally, catalyzes the phosphorylation of the position 2 hydroxy group of 4-diphosphocytidyl-2C-methyl-D-erythritol. In Chlamydia abortus (strain DSM 27085 / S26/3) (Chlamydophila abortus), this protein is 4-diphosphocytidyl-2-C-methyl-D-erythritol kinase.